Here is a 458-residue protein sequence, read N- to C-terminus: 3-isopropylmalate dehydratase large subunit (458 aa).

Residues C337, C397, and C400 each coordinate [4Fe-4S] cluster.

Belongs to the aconitase/IPM isomerase family. LeuC type 1 subfamily. In terms of assembly, heterodimer of LeuC and LeuD. [4Fe-4S] cluster serves as cofactor.

The enzyme catalyses (2R,3S)-3-isopropylmalate = (2S)-2-isopropylmalate. It participates in amino-acid biosynthesis; L-leucine biosynthesis; L-leucine from 3-methyl-2-oxobutanoate: step 2/4. Its function is as follows. Catalyzes the isomerization between 2-isopropylmalate and 3-isopropylmalate, via the formation of 2-isopropylmaleate. The chain is 3-isopropylmalate dehydratase large subunit from Leuconostoc mesenteroides subsp. mesenteroides (strain ATCC 8293 / DSM 20343 / BCRC 11652 / CCM 1803 / JCM 6124 / NCDO 523 / NBRC 100496 / NCIMB 8023 / NCTC 12954 / NRRL B-1118 / 37Y).